Here is a 375-residue protein sequence, read N- to C-terminus: Coproporphyrin III ferrochelatase (375 aa).

Fe-coproporphyrin III-binding residues include serine 59 and tyrosine 128. Residues histidine 191 and glutamate 286 each coordinate Fe(2+).

The protein belongs to the ferrochelatase family.

Its subcellular location is the cytoplasm. It catalyses the reaction Fe-coproporphyrin III + 2 H(+) = coproporphyrin III + Fe(2+). The protein operates within porphyrin-containing compound metabolism; protoheme biosynthesis. Functionally, involved in coproporphyrin-dependent heme b biosynthesis. Catalyzes the insertion of ferrous iron into coproporphyrin III to form Fe-coproporphyrin III. The sequence is that of Coproporphyrin III ferrochelatase from Streptomyces griseus subsp. griseus (strain JCM 4626 / CBS 651.72 / NBRC 13350 / KCC S-0626 / ISP 5235).